Consider the following 326-residue polypeptide: Tagatose 1,6-diphosphate aldolase (326 aa).

The protein belongs to the aldolase LacD family.

The enzyme catalyses D-tagatofuranose 1,6-bisphosphate = D-glyceraldehyde 3-phosphate + dihydroxyacetone phosphate. It functions in the pathway carbohydrate metabolism; D-tagatose 6-phosphate degradation; D-glyceraldehyde 3-phosphate and glycerone phosphate from D-tagatose 6-phosphate: step 2/2. The protein is Tagatose 1,6-diphosphate aldolase of Streptococcus pneumoniae serotype 4 (strain ATCC BAA-334 / TIGR4).